We begin with the raw amino-acid sequence, 239 residues long: DUP240 protein DFP3 (239 aa).

The Cytoplasmic segment spans residues 1-54; sequence MQPHLDNNSNNDDVKLDTLGEQNVLSSAENITLPEDTFKSYMTYLLYEMAHYKP. The chain crosses the membrane as a helical span at residues 55–75; it reads MIFSFLALSVSILIVVIFHNV. Over 76–79 the chain is Extracellular; it reads KACD. A helical transmembrane segment spans residues 80 to 104; sequence VVFGFSIFVTSILFLSTLIPFNVYI. Residues 105-239 lie on the Cytoplasmic side of the membrane; the sequence is SDEGFRIKLL…RKQYPDADIP (135 aa).

This sequence belongs to the DUP/COS family. In terms of assembly, interacts according to large scale protein interaction studies with MEC3 and ULP1.

The protein resides in the membrane. In Saccharomyces cerevisiae (strain ATCC 204508 / S288c) (Baker's yeast), this protein is DUP240 protein DFP3.